We begin with the raw amino-acid sequence, 293 residues long: ATP synthase gamma chain (293 aa).

It belongs to the ATPase gamma chain family. As to quaternary structure, F-type ATPases have 2 components, CF(1) - the catalytic core - and CF(0) - the membrane proton channel. CF(1) has five subunits: alpha(3), beta(3), gamma(1), delta(1), epsilon(1). CF(0) has three main subunits: a, b and c.

The protein resides in the cell inner membrane. In terms of biological role, produces ATP from ADP in the presence of a proton gradient across the membrane. The gamma chain is believed to be important in regulating ATPase activity and the flow of protons through the CF(0) complex. The polypeptide is ATP synthase gamma chain (Nitrosospira multiformis (strain ATCC 25196 / NCIMB 11849 / C 71)).